The sequence spans 6793 residues: MASNHISLAFANDEEISAIGFGSVEEAVSYYSDAAVNGFDQCRFVSLGLQDAVVGVEDDDVVMLITGVTQLRAYLGTFGDRPLNLRGWLLFSNCNYFLEELDLVFGRCGGTTIPVDQFMCGADGAPVIQEGDWTFMDYFQDSNQFTLNGITYVKAWDVDRKPNDYAKQNVTCIRRITYITDHRHVLADGTTMKTARHPKVNKSVVLDSPFDQIYKEVGSPFMGNGSTFVEMLKDPAFFHALITCECGRSEWTVGDWKGYNSLCCNIKCKPITIVTPKAVPGAVVITKAGIGAGLKCYNNVFLKHIIDLVVPGTNLGWGVWRIAKVQSKDDVATSGNVLVDDPEDRLDPCYFGNDGPFATKFKFQLLANSFDDEVKGAIVQGVVHVNTAICDVVKDILGLPWFVKKLGSLVTVMWDQFVAGVQSMKICTLKVVQLAKALSCATMSVVKGVITLVAEVPEIFKRLFYTLTSALKSLCTSSCDALVVAGKSFAKIGDYVLLPSALVRLVSSKVKGKAQSGIKQLQFATVVLGDTHKVESDRVEFSSVNLKMVDEEFPLNPVGHTVAVGNQAFFCSDGLYRFMADRDLVITSPIFKPELELEPIFECDAIPGFPKVAASNVAELCVKVDTLLFNYDKIYKKYSTIIKGDRCYIQCTHTFKAPSYYFDDDEFVELCTKYYKLPDFDAFYNAVHAATDMDQFCALCTSGFEVFIPRVPDCPPILNDIDGGSIWTSFILSVRSATDFIKTLKIDLGLNGVVVFVTKKFRKAGALLQKLYNAFLDTVTSFIKVAGVAFKYCATCVPKIVINGCYHTVTRLFAKDLQIPTEDGVADFNTFNHCVFPVNPTRIETDSLELEEVDFVEPGVDGKLVILDDYSFYSDGTNYYPSDGKGVVASCFKKKGGGVVTISDEVQVRTIDPVYKVRLEYEFEDETLVKVCEKAIGTKLKVTGDWSNLLETLEKAMDVVRQHLDVPDYFVYDEEGGTDLNLTIMVSQWPLSSDSEDDFKAVDDEPNANTDETVDTFAEDVAETQNVQQDVTQDEVEAVCDLVVKATEEGPIEHEELSEDQKEVQQALAFIEDKPVVVKPDVFAFSYASYGGLKVLNQSSNNCWVSSALVQLQLTGLLDSDEMQLFNAGRVSPMVKRCYESQRAIFGSLGDVSACLESLLKDRDGMSITCTIDCGCGPGVRVYENAIFRFTPLKTAFPMGRCLICSKTLMHTITQMKGTGIFCRDATALDVDTLVVKPLCAAVYVGAQDGGHYLTNMYDANMAVDGHGRHPIKFNTINTLCYKDVDWEVSNGSCDVKPFLTYKNIEFYQGELSALLSVNHDFVVNAANEQLSHGGGIAKALDDLTKGELQVLSNQYVSRNGSIKVGSGVLIKCKEHSILNVVGPRKGKHAAELLTKAYTFVFKQKGVPLMPLLSVGIFKVPITESLAAFLACVGDRVCKCFCYTDKERLAIQNFVTSFQTEQPVEPLPVIQEVKGVQLEKPVPDVKVENPCEPFRIEGDAKFYDLTPSMVQSLQVTRLVSFTNSDLCLGSFVRDCDGYVQGSLGGAIANYKKSNPVLPAGNCVTLKCDGFISFTFVILPKEGDTNYEKNFNRAIAKFLKLKGSLLVVVEDSSVFNKISHASVAGYVAKPALVDTLFEAKPVQVVVTQDQRSFHTVELSTSQTYGQQLGDCVVEDKKVTNLKPVSKDKVVSVVPNVDWDKHYGFVDAGIFHTLDHTMFVFDNNVVNGKRVLRTSDNNCWINAVCLQLQFANAKFKPKGLQQLWESYCTGDVAMFVHWLYWITGVEKGEPSDAENTLNIISRFLKPQGSVEMLRATSTTCDGTCSTKRVVSTPVVNASVLKVGLDDGNCVHGLPLVDRVVSVNGTVIITNVGDTPGKPVVATENLLLDGVSYTVFQDSTTGVGHYTVFDKEAKLMFDGDVLKPCDLNVSPVTSVVVCNNKKIVVQDPVKRVELDASKFLDTMNVASEKFFTFGDFVSRNIIVLIVYLFSLLAICFRALKKRDMKVMAGVPERTGIILKRSVKYNYKALKFFFRLKFQYIKVFLKFSLVLYTLYALMFMFIRFTPVGTPICKRYTDGYANSTFDKNDYCGNVLCKICLYGYEELSDFTHTRVIWQHLKDPLIGNILPLFYLVFLIIFGGFFVRIGITYFIMQYINAAGVALGYQDNVWLLHLLPFNSMGNIIVVAFIVTRILLFLKHVLFGCDKPSCIACSKSAKLTRVPLQTILQGVTKSFYVNANGGKKFCKKHNFFCVDCDSYGYGCTFINDVIAPELSNVTKLNVIPTGPATIIIDKVEFSNGFYYLYSGSTFWKYNFDITEAKYACKDVLKNCNILTDFVVFNNSGSNVTQVKNACVYFSQLLCKPIKLVDSALLASLNVDFSANLHKAFVEVLSNSFGKDLSNCSNMNECRESLGLSDVPEEEFSAAVSEAHRYDVLISDVSFNNLIVSYAKPEEKLAVHDIANCMRVGAKVVNHNVLTKDNVPVVWLAKDFIALSEEARKYIVRTTKTKGINFMLTFNDRRMHLTIPTISVANKKGAGLPSLFTRLYSFFWHLCVLIVVLFVATSLLDFSAQVTSDTQYDFKYIENGVLKVFEKPLDCVHNAFVNFNEWHNAKFGSIPTNSRRCPIVVGTSDEVRYIPGVPAGVFLYGKSLIFAMSTIFGTSGLCFDDRGLTDPDSCIFNSACTTLSGIGGRNVYCYREGVVDNAKLYSSLLPHSYYRLMDGNHIVLPEIITRGFGIRTIKTQAMTYCRTGECIDSQAGVCVGLDRFFVYSKTPGSDYVCGTGFFSLLFNVIGMFSNSIPVTVMSGQILLNCVVAFTAVMACFAFTKFKRLFGDMSFGVLSVGLCTVVNNLSYVVTQNSIGMLAYATLYFLCTKGVRYSWVWHVGFAISYCFLAPWWVVLAYLICALLEFLPNLFKLKVSTQLFEGDKFVGSFESAASGTFVLDMHSYQKLANSISTEKLKQYCASYNRYKYYSGSASEADYRLACFAHLAKAMSDFANDHMDKLYTPPTVSYNSTLQAGLRKMAQPSGIVEGCIVRVSYGNLTLNGLWLGDTVICPRHVIASNTTNVIDYDHAMSLVRLHNFSISSGNMFLGVISASMRGTLLHIKVNQSNVNTPNYTYKVLKPGDSFNILACYDGSAAGVYGVNMRTNYTIRGSFISGACGSPGYNINNGVVEFCYMHHLELGSGCHVGSDMDGTMYGKYEDQPTLQIEGASNLVTENVCSWLYGALINGDRWWLSSVSVGVDTYNEWALRNGMTALKNVDCFSLLVAKTGVDVGRLLASIQKLHGNFGGKSILGCTSLCDEFTLSEVVKQMYGVTLQSGKVSRAFRNASIVCCLLFLFLSEMLNHSKLFWINPGYITPVFLAIIVASSALMLLVKHKLLFLQLYLLPSLCIVSGYNIFKDYHFYTYMLEEFDYKVPFGGFNVTGVLNISLCCFVMGLHTFRFLQTPNKIFSYVVAVLTVLYTYYYSTDVLGLILTSMSGFTNYWFIGTATYKLATYVLPHTSLLDSFDAIKAVVFLYLLLGYCNCVYYGSLYWINRFCKLTLGCYEFKVSAAEFKYMVANGLRAPTGVFDALILSLKLIGVGGRKTIKISSVQSKLTDLKCTNVVLLGCLSNMNIAANSREWAYCVDLHNKINLCNDAEAAQEMLLALLAFFLSKNSAFGVDELLDSYFNDSSVLQSVAATYVNLPSYLAYETARQSYEDALANGSPPQLVKQLRHAMNVAKSEFDREASTQRKLDRMAEQAASQMYKEARAVNRKSKVVSAMHSLLFGMLRRLDMSSVDTILSLAKDGVVPLSIIPAVSATKLNIVVSDIESYSKIQREGCVHYAGVIWSVVDIKDNDGKPVHAKEVVTSNVESLAWPLFLNCERIIKLQNNEIIPSKIKQRPIKAEGEGVVADGNALYSNEGGRTFMYAFISDKPDLKVVKWEFDGGSNAIELEPPCKFLVEAPSGPVVKYLYFVRNLNNLRRGAVLGFIGATVRLQAGKQTEQATNSSLLTLCAFAVDPPKTYLDAVKSGHRPVGNCVKMLANGSGNGQAITNGVEASTNQDSYGGASVCLYCRAHVEHPDMDGFCKLRGKYVQVPLGTLDPIRFVLENTVCKVCGCWQANGCTCDRAVIQSVDSGYLNRVRGSSAARLEPLNGSDTHHVFRAFDVYNRDVACISKFLKVNCVRLKNLDKHDAFWIVKKCTKSVMEHEQSIYNLISDCGAVAKHDFFTWKEGRSVYGNVCRQDLTEYTMMDLCYALRNFDENNCETLKKILVVVGACDESYFDNKLWFDPVENEDVHRVYAKLGTIVARAMLKCVKYCDAMVEQGIVGVITLDNQDLNGDFYDFGDFVTSVKGMGVPICTSYYSYMMPVMGMTNCLASECFIKSDIFGEDFRTFDLLAYDFTEHKVNLFNKYFKHWGQTYHPNCEDCHDESCIVHCANFNTLFATTIPITAFGPLCRKCWIDGVPLVTTAGYHFKQLGIVWNKDLNLHSSRLTINELLQFCADPSLLIASSPALVDKRTVCFSVAALGTGMTNQTVKPGHFNREFYDFLRSQGFFEEGSELTLKHFFFAQKGDAAVRDFDYYRYNRTTVLDICQARVVYQIVQCYFGMYEGGCITAKEVIVNNLNKSAGYPFNKFGKAGLYYDSLSYEEQDDLYAYTKRNIIPTMTQLNLKYAISGKDRARTVGGVSLLSTMTTRQYHQKHLKSIVNTRGASVVIGTTKFYGGWDNMLKTLIKDVENPHLMGWDYPKCDRALPNMIRMISAMILGSKHVNCCSSSDRYYRLCNELAQVLTEMVYSNGGFYVKPGGTTSGDATTAYANSVFNIFQATSANVNRLLSVDSNTCNNIEVKQLQRKLYDCCYRSSSVDQSFVEEYFGYLRKHFSMMILSDDGVVCYNSEYAALGYVADLNAFKAVLYYQNNVFMSASKCWIEPDINKGPHEFCSQHTMQIVDKDGTYYLPYPDPSRILSAGVFVDDIVKTDPVILLERYVSLAIDAYPLSKHDNPEYRRVFTVMLDWVKHLYKTLNQGVLDSFSVTLLEDATAKFWDESFYASMYEQSSVLQSAGLCVVCSSQTVLRCGDCIRRPMLCTKCAYDHVVSTSHKFILAITPYVCCSSGCGVSDVTKLYLGGLSYWCVDHKPRLSFPLCSSGNVFGLYKNSATGSPDVDDFNTLATSDWTDVKDYKLANDVKDSLRLFAAETIKAKEESVKSSYACATIHEVVGPKELVLKWEVGKPRPPLSRNSVFTCYHITKNTKFQVGEFTFEKLDYDNDAVSYKSTATTKLVPGMVFVLTSHNVQPLRAPTIINQERYSTLHKLRPAFNIHEDYSNLIPYYQLIGKQKLTTIQGPPGSGKSHCVIGLGLYFPGARIVFTACSHAAVDSLCVKAATAYSSDRCSRIIPQKARIECYDGFKSNNTSAQYLFSTVNALPEVNADICVVDEVSMCTNYDLSVINQRVNYRHIVYVGDPQQLPAPRVMITRGVLVPEDYNVVTRRMCVLKPDIFLHKCYRCPAEIVNTVSEMVYENQFVPVKSESKECFKIYCRGNVQVDNGSSINRRQLEVVRMFLAKNPKWAKAVFISPYNSQNYVAGRVLGLQIQTVDSSQGSEYDYVIYTQTSDTAHASNVNRFNVAITRAKKGILCIMCDRELFDILKFYELKLSDLQVGDGCGLFKDCYKGEDNLPPSHAPTFMSLSDNFKTDKDLAVQIGVNGPVKYEHVISFMGFRFDINVPNQHTLFCTRDFAMRNARGWLGFDVEGAHVIGSNVGTNVPLQLGFSNGVDFVVRPEGCVSTEVGDVIQPVRARAPPGDQFTHLLPLLRKGQPWSVIRRRIVQMCSDYLANLSDTLIFVLWSGGLELTTMRYFVKLGPVQTCDCGKRATCYNSTNHTFSCFRHALGSDYIYNCYCIDIQQWGYTGSLSMNHHEVCNIHRNEHVASGDAAMTRCLAIHDCFVKNVDWSITYPFIANEQAINKSGRLVQSHVMRAVLKLYNPKAIHDVGNPKGIRCVVTDASWYCYDKNPTNTNVKMLEYDYITHGQLDGLCLFWNCNVDMYPEFSVVCRFDTRMRSTLNLEGCNGGSLYVNNHAFHTPAYDKRAFAKLKAMPFFFYDDSECEKLQDAVNYVPLRASNCITRCNVGGAVCSKHCALYHNYVMAYNTFTTAGFTIWVPNSFDMFNLWQTFKNSNVQGLENIAYNVVKKGSFVGVEGELPVAVVNDKVMVRDGVSDNVVFVNNTSLPTNVAFELYAKRKVGLTPPLTILKNLGVVCTSKCVLWDYEASRPLTTFTKDVCKYTDFDGDVCTLFDNSVPGAFERFTVTKNAVLISLTAVKKLTAIKLTYGYLNGVPVFTHEDKPFTWYIYTRKDGAFVEYPDGYFTQGRVISDFQPRSNMEEDFLNMDMGLFISKYGLEDYGFEHVVFGDVSKTTLGGLHLLISQIRLSKIGVLKVEDFVSSSDSTLKSCTVTYVDNPSSKMVCTYVDLLLDDFVNILKSVDLSVVSKVHEVVIDCKVWRWMLWCKDHKVQTFYPQLQSAEWKCGYSMPSIYKIQRMCLEPCNLYNYGSGLKLPDGIMFNVVKYTQLCQYLNSTTMCVPHHMRVLHLGAGSDKGVAPGTAVLRRWLPLDAVIVDNDVNDYVSDADFSYTGDCASMYLTDKFDLVISDMYDGRTKSCDGDNVSKEGFFPYINGVITEKLALGGTVAIKITEFSWNKKLYELIQKFEYWTLFCTSVNTSSSEAFLIGVHFLGDFSTNAIIDGNIMHANYIFWRNSTIMTMSYNSVLDLSKFSCKHKATVVVNLKDSSVTDLVLGLLKNGKLLIRNNGVVCGFSNHLVNSTK.

Positions 2 to 109 (ASNHISLAFA…ELDLVFGRCG (108 aa)) constitute a CoV Nsp1 globular domain. Residues 112–368 (TIPVDQFMCG…TKFKFQLLAN (257 aa)) enclose the CoV Nsp2 N-terminal domain. In terms of domain architecture, CoV Nsp2 middle spans 396-785 (ILGLPWFVKK…LDTVTSFIKV (390 aa)). The 122-residue stretch at 776–897 (LDTVTSFIKV…VASCFKKKGG (122 aa)) folds into the CoV Nsp2 C-terminal domain. The region spanning 898–993 (GVVTISDEVQ…IMVSQWPLSS (96 aa)) is the Ubiquitin-like 1 domain. A Peptidase C16 1 domain is found at 1069 to 1302 (AFIEDKPVVV…SCDVKPFLTY (234 aa)). Cys-1103 acts as the For PL1-PRO activity in catalysis. Residues 1174 to 1205 (CGCGPGVRVYENAIFRFTPLKTAFPMGRCLIC) form a C4-type 1; degenerate zinc finger. Active-site for PL1-PRO activity residues include His-1252 and Asp-1265. Residues 1303–1467 (KNIEFYQGEL…FQTEQPVEPL (165 aa)) enclose the Macro domain. The Ubiquitin-like 2 domain occupies 1638–1693 (AKPVQVVVTQDQRSFHTVELSTSQTYGQQLGDCVVEDKKVTNLKPVSKDKVVSVVP). In terms of domain architecture, Peptidase C16 2 spans 1699 to 1965 (KHYGFVDAGI…FLDTMNVASE (267 aa)). Cys-1737 functions as the For PL2-PRO activity in the catalytic mechanism. The C4-type 2; degenerate zinc-finger motif lies at 1816-1849 (TTCDGTCSTKRVVSTPVVNASVLKVGLDDGNCVH). Active-site for PL2-PRO activity residues include His-1902 and Asp-1915. Transmembrane regions (helical) follow at residues 1973-1993 (FVSRNIIVLIVYLFSLLAICF) and 2036-2056 (YIKVFLKFSLVLYTLYALMFM). The tract at residues 1973–2184 (FVSRNIIVLI…MGNIIVVAFI (212 aa)) is HD1. The 3Ecto domain occupies 2052–2116 (ALMFMFIRFT…TRVIWQHLKD (65 aa)). 2 cysteine pairs are disulfide-bonded: Cys-2068-Cys-2094 and Cys-2086-Cys-2091. 3 helical membrane passes run 2119–2139 (IGNILPLFYLVFLIIFGGFFV), 2141–2161 (IGITYFIMQYINAAGVALGYQ), and 2164–2184 (VWLLHLLPFNSMGNIIVVAFI). A Y1 region spans residues 2190-2280 (LFLKHVLFGC…VTKLNVIPTG (91 aa)). Positions 2190-2530 (LFLKHVLFGC…PTISVANKKG (341 aa)) constitute a CoV Nsp3 Y domain. 8 residues coordinate Zn(2+): His-2194, Cys-2199, Cys-2204, Cys-2207, Cys-2240, His-2243, Cys-2247, and Cys-2250. A ZF1 region spans residues 2194-2207 (HVLFGCDKPSCIAC). The ZF2 stretch occupies residues 2240 to 2250 (CKKHNFFCVDC). Residues 2281–2370 (PATIIIDKVE…LVDSALLASL (90 aa)) form a Y2 region. The segment at 2281–2530 (PATIIIDKVE…PTISVANKKG (250 aa)) is coV-Y. The segment at 2371–2428 (NVDFSANLHKAFVEVLSNSFGKDLSNCSNMNECRESLGLSDVPEEEFSAAVSEAHRYD) is Y3. The tract at residues 2429–2530 (VLISDVSFNN…PTISVANKKG (102 aa)) is Y4. 7 helical membrane-spanning segments follow: residues 2543–2563 (FFWHLCVLIVVLFVATSLLDF), 2634–2654 (VPAGVFLYGKSLIFAMSTIFG), 2669–2689 (DSCIFNSACTTLSGIGGRNVY), 2769–2789 (GSDYVCGTGFFSLLFNVIGMF), 2802–2822 (ILLNCVVAFTAVMACFAFTKF), 2829–2849 (MSFGVLSVGLCTVVNNLSYVV), and 2878–2898 (VGFAISYCFLAPWWVVLAYLI). Residues 2543 to 2898 (FFWHLCVLIV…PWWVVLAYLI (356 aa)) are HD2. Positions 2917–3012 (LFEGDKFVGS…PTVSYNSTLQ (96 aa)) constitute a Nsp4C domain. Residues 3013 to 3314 (AGLRKMAQPS…VKQMYGVTLQ (302 aa)) enclose the Peptidase C30 domain. Residues His-3053 and Cys-3156 each act as for 3CL-PRO activity in the active site. The next 7 membrane-spanning stretches (helical) occupy residues 3351 to 3371 (GYITPVFLAIIVASSALMLLV), 3376 to 3396 (LFLQLYLLPSLCIVSGYNIFK), 3414 to 3434 (FGGFNVTGVLNISLCCFVMGL), 3443 to 3463 (PNKIFSYVVAVLTVLYTYYYS), 3466 to 3486 (VLGLILTSMSGFTNYWFIGTA), 3488 to 3507 (YKLATYVLPHTSLLDSFDAI), and 3511 to 3531 (VFLYLLLGYCNCVYYGSLYWI). The HD3 stretch occupies residues 3351–3531 (GYITPVFLAI…CVYYGSLYWI (181 aa)). The region spanning 3591–3673 (SKLTDLKCTN…SYFNDSSVLQ (83 aa)) is the RdRp Nsp7 cofactor domain. The RdRp Nsp8 cofactor domain maps to 3674-3868 (SVAATYVNLP…LNCERIIKLQ (195 aa)). Positions 3869–3976 (NNEIIPSKIK…GFIGATVRLQ (108 aa)) constitute a Nsp9 ssRNA-binding domain. Residues 3977 to 4115 (AGKQTEQATN…DRAVIQSVDS (139 aa)) form the ExoN/MTase coactivator domain. 8 residues coordinate Zn(2+): Cys-4050, Cys-4053, His-4059, Cys-4066, Cys-4092, Cys-4095, Cys-4103, and Cys-4105. 2 zinc fingers span residues 4050–4066 (CLYCRAHVEHPDMDGFC) and 4092–4105 (CKVCGCWQANGCTC). Residues 4117-4366 (YLNRVRGSSA…ASECFIKSDI (250 aa)) enclose the NiRAN domain. Positions 4372–4470 (RTFDLLAYDF…WNKDLNLHSS (99 aa)) constitute a Nsp12 Interface domain. Zn(2+) is bound by residues His-4401, Cys-4407, Cys-4412, Cys-4416, and Cys-4593. Residues 4471–5038 (RLTINELLQF…SMYEQSSVLQ (568 aa)) enclose the Nsp12 RNA-dependent RNA polymerase domain. Residues 4473–4687 (TINELLQFCA…HQKHLKSIVN (215 aa)) form a rdRp Fingers N-ter region. Residues 4688–4726 (TRGASVVIGTTKFYGGWDNMLKTLIKDVENPHLMGWDYP) are rdRp Palm N-ter. The RdRp catalytic domain maps to 4718–4880 (PHLMGWDYPK…CYNSEYAALG (163 aa)). The tract at residues 4727–4785 (KCDRALPNMIRMISAMILGSKHVNCCSSSDRYYRLCNELAQVLTEMVYSNGGFYVKPGG) is rdRp Fingers C-ter. 3 residues coordinate Zn(2+): His-4748, Cys-4751, and Cys-4752. Residues 4786–4921 (TTSGDATTAY…NKGPHEFCSQ (136 aa)) are rdRp Palm C-ter. Residues Ser-4865, Asp-4866, and Asp-4867 contribute to the active site. A rdRp Thumb region spans residues 4922-5038 (HTMQIVDKDG…SMYEQSSVLQ (117 aa)). Positions 5039 to 5151 (SAGLCVVCSS…DDFNTLATSD (113 aa)) constitute a CV ZBD domain. 12 residues coordinate Zn(2+): Cys-5043, Cys-5046, Cys-5054, Cys-5057, Cys-5064, Cys-5067, His-5071, His-5077, Cys-5088, Cys-5093, Cys-5110, and His-5113. The (+)RNA virus helicase ATP-binding domain occupies 5296–5477 (NIHEDYSNLI…MCVLKPDIFL (182 aa)). ATP is bound at residue 5321 to 5328 (GPPGSGKS). The region spanning 5478-5647 (HKCYRCPAEI…DGCGLFKDCY (170 aa)) is the (+)RNA virus helicase C-terminal domain. In terms of domain architecture, ExoN spans 5707 to 5921 (LFCTRDFAMR…RCLAIHDCFV (215 aa)). Residues Asp-5725, Glu-5727, and Glu-5826 contribute to the active site. 7 residues coordinate Zn(2+): Cys-5842, Cys-5844, Cys-5860, His-5863, His-5891, Cys-5895, and His-5898. Catalysis depends on residues His-5902 and Asp-5907. Cys-5913 contacts Zn(2+). The N7-MTase domain maps to 5930 to 6151 (YPFIANEQAI…NLWQTFKNSN (222 aa)). 5965 to 5971 (DVGNPKG) contributes to the S-adenosyl-L-methionine binding site. Positions 6042–6056 (CNGGSLYVNNHAFHT) are gpppA-binding. Positions 6080, 6097, 6108, and 6111 each coordinate Zn(2+). In terms of domain architecture, Nsp15 N-terminal oligomerization spans 6154 to 6214 (GLENIAYNVV…NVAFELYAKR (61 aa)). One can recognise an AV-Nsp11N/CoV-Nsp15M domain in the interval 6215 to 6332 (KVGLTPPLTI…IYTRKDGAFV (118 aa)). The region spanning 6349 to 6489 (QPRSNMEEDF…KDHKVQTFYP (141 aa)) is the NendoU domain. Catalysis depends on residues His-6379, His-6394, Lys-6435, Lys-6537, Asp-6621, Lys-6661, and Glu-6694. The Nidovirus-type SAM-dependent 2'-O-MTase domain occupies 6493–6789 (SAEWKCGYSM…VVCGFSNHLV (297 aa)).

This sequence belongs to the coronaviruses polyprotein 1ab family. 3CL-PRO exists as monomer and homodimer. Eight copies of nsp7 and eight copies of nsp8 assemble to form a heterohexadecamer. Nsp9 is a dimer. Nsp10 forms a dodecamer. Requires Mn(2+) as cofactor. In terms of processing, specific enzymatic cleavages in vivo by its own proteases yield mature proteins. 3CL-PRO and PL-PRO proteinases are autocatalytically processed.

The protein localises to the host membrane. Its subcellular location is the host cytoplasm. It localises to the host perinuclear region. The protein resides in the host endoplasmic reticulum-Golgi intermediate compartment. It carries out the reaction Thiol-dependent hydrolysis of ester, thioester, amide, peptide and isopeptide bonds formed by the C-terminal Gly of ubiquitin (a 76-residue protein attached to proteins as an intracellular targeting signal).. The enzyme catalyses RNA(n) + a ribonucleoside 5'-triphosphate = RNA(n+1) + diphosphate. It catalyses the reaction ATP + H2O = ADP + phosphate + H(+). The catalysed reaction is a 5'-end diphospho-ribonucleoside in mRNA + GTP + H(+) = a 5'-end (5'-triphosphoguanosine)-ribonucleoside in mRNA + diphosphate. It carries out the reaction a 5'-end (N(7)-methyl 5'-triphosphoguanosine)-ribonucleoside in mRNA + S-adenosyl-L-methionine = a 5'-end (N(7)-methyl 5'-triphosphoguanosine)-(2'-O-methyl-ribonucleoside) in mRNA + S-adenosyl-L-homocysteine + H(+). The enzyme catalyses uridylyl-uridylyl-ribonucleotide-RNA = a 3'-end uridylyl-2',3'-cyclophospho-uridine-RNA + a 5'-end dephospho-ribonucleoside-RNA. In terms of biological role, the replicase polyprotein of coronaviruses is a multifunctional protein: it contains the activities necessary for the transcription of negative stranded RNA, leader RNA, subgenomic mRNAs and progeny virion RNA as well as proteinases responsible for the cleavage of the polyprotein into functional products. The papain-like proteinase 1 (PLP1) and papain-like proteinase 2 (PLP2) are responsible for the cleavages located at the N-terminus of the replicase polyprotein. In addition, PLP2 possesses a deubiquitinating/deISGylating activity and processes both 'Lys-48'- and 'Lys-63'-linked polyubiquitin chains from cellular substrates. PLP2 also antagonizes innate immune induction of type I interferon by blocking the nuclear translocation of host IRF-3. Functionally, responsible for the majority of cleavages as it cleaves the C-terminus of replicase polyprotein at 11 sites. Recognizes substrates containing the core sequence [ILMVF]-Q-|-[SGACN]. Inhibited by the substrate-analog Cbz-Val-Asn-Ser-Thr-Leu-Gln-CMK. Also contains an ADP-ribose-1''-phosphate (ADRP)-binding function. Its function is as follows. The helicase which contains a zinc finger structure displays RNA and DNA duplex-unwinding activities with 5' to 3' polarity. ATPase activity is strongly stimulated by poly(U), poly(dT), poly(C), poly(dA), but not by poly(G). In terms of biological role, the exoribonuclease acts on both ssRNA and dsRNA in a 3' to 5' direction. Nsp7-nsp8 hexadecamer may possibly confer processivity to the polymerase, maybe by binding to dsRNA or by producing primers utilized by the latter. Functionally, forms a primer, NSP9-pU, which is utilized by the polymerase for the initiation of RNA chains. Interacts with ribosome signal recognition particle RNA (SRP). Together with NSP8, suppress protein integration into the cell membrane, thereby disrupting host immune defenses. Its function is as follows. RNA-directed RNA polymerase that catalyzes the transcription of viral genomic and subgenomic RNAs. Acts in complex with nsp7 and nsp8 to transcribe both the minus and positive strands of genomic RNA. The kinase-like NiRAN domain of NSP12 attaches one or more nucleotides to the amino terminus of NSP9, forming a covalent RNA-protein intermediate that serves as transcription/replication primer. Subgenomic RNAs (sgRNAs) are formed by discontinuous transcription: The polymerase has the ability to pause at transcription-regulating sequences (TRS) and jump to the leader TRS, resulting in a major deletion. This creates a series of subgenomic RNAs that are replicated, transcribed and translated. In addition, Nsp12 is a subunit of the viral RNA capping enzyme that catalyzes the RNA guanylyltransferase reaction for genomic and sub-genomic RNAs. Subsequently, the NiRAN domain transfers RNA to GDP, and forms the core cap structure GpppA-RNA. In terms of biological role, plays a role in viral transcription/replication and prevents the simultaneous activation of host cell dsRNA sensors, such as MDA5/IFIH1, OAS, and PKR. Acts by degrading the 5'-polyuridines generated during replication of the poly(A) region of viral genomic and subgenomic RNAs. Catalyzes a two-step reaction in which a 2'3'-cyclic phosphate (2'3'-cP) is first generated by 2'-O transesterification, which is then hydrolyzed to a 3'-phosphate (3'-P). If not degraded, poly(U) RNA would hybridize with poly(A) RNA tails and activate host dsRNA sensors. This chain is Replicase polyprotein 1ab (rep), found in Bat coronavirus 512/2005 (BtCoV).